A 158-amino-acid polypeptide reads, in one-letter code: Ribosome maturation factor RimP (158 aa).

This sequence belongs to the RimP family.

It localises to the cytoplasm. Required for maturation of 30S ribosomal subunits. This chain is Ribosome maturation factor RimP, found in Lactobacillus helveticus (strain DPC 4571).